A 457-amino-acid polypeptide reads, in one-letter code: Succinate-semialdehyde dehydrogenase [NADP(+)] 1 (457 aa).

209–214 is a binding site for NADP(+); that stretch reads GSEPAG. Active-site residues include Glu231 and Cys265.

It belongs to the aldehyde dehydrogenase family.

It carries out the reaction succinate semialdehyde + NAD(+) + H2O = succinate + NADH + 2 H(+). It catalyses the reaction succinate semialdehyde + NADP(+) + H2O = succinate + NADPH + 2 H(+). Functionally, catalyzes the NADP(+)-dependent oxidation of succinate semialdehyde to succinate. It is believed to be the main source of succinate semialdehyde dehydrogenase activity in Mycobacterium. The chain is Succinate-semialdehyde dehydrogenase [NADP(+)] 1 (gabD1) from Mycobacterium bovis (strain ATCC BAA-935 / AF2122/97).